Here is a 344-residue protein sequence, read N- to C-terminus: DNA fragmentation factor subunit beta (344 aa).

One can recognise a CIDE-N domain in the interval glutamine 7–glycine 83.

As to quaternary structure, heterodimer of DFFA and DFFB. Interacts with H1-1.

The protein localises to the cytoplasm. It is found in the nucleus. Inhibited by DFFA (DFF45). Nuclease that induces DNA fragmentation and chromatin condensation during apoptosis. Degrades naked DNA and induces apoptotic morphology. The chain is DNA fragmentation factor subunit beta (Dffb) from Mus musculus (Mouse).